Reading from the N-terminus, the 856-residue chain is Nuclear valosin-containing protein-like (856 aa).

Positions Met1–Lys220 are interaction with RPL5. The Nucleolar localization signal motif lies at Arg49 to Arg52. Position 70 is an N6-acetyllysine (Lys70). Residues Ala84 to Ile175 form a disordered region. The Nuclear localization signal signature appears at Lys85–Arg88. A compositionally biased stretch (acidic residues) spans Glu92–Pro111. Polar residues-rich tracts occupy residues Gln114–Leu124 and Asp133–Gly158. A Phosphoserine modification is found at Ser134. Thr138 carries the phosphothreonine modification. Lys156 is subject to N6-acetyllysine. Residue Ser191 is modified to Phosphoserine. The interval Pro197–Gln236 is disordered. Basic and acidic residues predominate over residues Gln205 to Lys218. Lys208 participates in a covalent cross-link: Glycyl lysine isopeptide (Lys-Gly) (interchain with G-Cter in SUMO2). A phosphoserine mark is found at Ser211 and Ser215. A Nuclear localization signal motif is present at residues Lys218–Lys232. A compositionally biased stretch (basic residues) spans Arg219–Arg230. The interaction with WDR74 stretch occupies residues Val267–Leu474. ATP is bound at residue Gly305 to Thr312. A disordered region spans residues Gln496 to Glu523. Residue Gly622 to Thr629 participates in ATP binding.

This sequence belongs to the AAA ATPase family. Interacts with NCL/nucleolin. Isoform 1 and isoform 2 interact with TERT and isoform 1 exhibits a higher binding affinity for TERT compared to isoform 2. Isoform 1 interacts with MTREX in an ATP-dependent manner; the interaction is required to associate NVL with nuclear RNA exosome. Isoform 1 interacts with RPL5 in an ATP-dependent manner. Interacts with WDR74 (through WDR repeats); the interaction is independent of RNA or pre-60S ribosome particles. As to expression, widely expressed. Highest level of expression in heart, placenta, skeletal muscle, pancreas and retina.

It localises to the nucleus. The protein resides in the nucleoplasm. Its subcellular location is the nucleolus. In terms of biological role, participates in the assembly of the telomerase holoenzyme and effecting of telomerase activity via its interaction with TERT. Involved in both early and late stages of the pre-rRNA processing pathways. Spatiotemporally regulates 60S ribosomal subunit biogenesis in the nucleolus. Catalyzes the release of specific assembly factors, such as WDR74, from pre-60S ribosomal particles through the ATPase activity. The polypeptide is Nuclear valosin-containing protein-like (Homo sapiens (Human)).